Reading from the N-terminus, the 334-residue chain is Glutaminase (334 aa).

The substrate site is built by Ser-76, Asn-126, Glu-170, Asn-177, Tyr-201, Tyr-253, and Val-271.

It belongs to the glutaminase family. As to quaternary structure, homotetramer.

It catalyses the reaction L-glutamine + H2O = L-glutamate + NH4(+). The chain is Glutaminase from Trichormus variabilis (strain ATCC 29413 / PCC 7937) (Anabaena variabilis).